The following is a 473-amino-acid chain: Glutamate--tRNA ligase (473 aa).

The 'HIGH' region motif lies at 11–21; sequence PSPTGFLHIGG. The short motif at 240 to 244 is the 'KMSKS' region element; that stretch reads KLSKR. ATP is bound at residue lysine 243.

The protein belongs to the class-I aminoacyl-tRNA synthetase family. Glutamate--tRNA ligase type 1 subfamily. Monomer.

The protein localises to the cytoplasm. It carries out the reaction tRNA(Glu) + L-glutamate + ATP = L-glutamyl-tRNA(Glu) + AMP + diphosphate. In terms of biological role, catalyzes the attachment of glutamate to tRNA(Glu) in a two-step reaction: glutamate is first activated by ATP to form Glu-AMP and then transferred to the acceptor end of tRNA(Glu). This Rhodopseudomonas palustris (strain HaA2) protein is Glutamate--tRNA ligase.